The primary structure comprises 217 residues: Redox-sensing transcriptional repressor Rex (217 aa).

The H-T-H motif DNA-binding region spans 18–57 (LYYRFLKNLHASGKQRVSSAELSDAVKVDSATIRRDFSYF). 92 to 97 (GVGNLG) provides a ligand contact to NAD(+).

This sequence belongs to the transcriptional regulatory Rex family. In terms of assembly, homodimer.

It localises to the cytoplasm. In terms of biological role, modulates transcription in response to changes in cellular NADH/NAD(+) redox state. This chain is Redox-sensing transcriptional repressor Rex, found in Bacillus pumilus (strain SAFR-032).